Reading from the N-terminus, the 366-residue chain is Polyprenyl transferase ausN (366 aa).

8 helical membrane passes run 97-117, 121-141, 164-184, 215-235, 239-259, 287-307, 308-328, and 346-366; these read VVGI…DLLL, LLLT…NDLI, LPTA…LFLF, LILV…GVEP, ILSS…IDLV, LAYS…LLGG, LRAP…WTFL, and SCLM…AVRV.

It belongs to the UbiA prenyltransferase family. Mg(2+) is required as a cofactor.

Its subcellular location is the membrane. The enzyme catalyses 3,5-dimethylorsellinate + (2E,6E)-farnesyl diphosphate = (3R)-3-farnesyl-6-hydroxy-2,3,5-trimethyl-4-oxocyclohexa-1,5-diene-1-carboxylate + diphosphate + H(+). Its pathway is secondary metabolite biosynthesis; terpenoid biosynthesis. Polyprenyl transferase; part of the gene cluster that mediates the biosynthesis of calidodehydroaustin, a fungal meroterpenoid. The first step of the pathway is the synthesis of 3,5-dimethylorsellinic acid by the polyketide synthase ausA. 3,5-dimethylorsellinic acid is then prenylated by the polyprenyl transferase ausN. Further epoxidation by the FAD-dependent monooxygenase ausM and cyclization by the probable terpene cyclase ausL lead to the formation of protoaustinoid A. Protoaustinoid A is then oxidized to spiro-lactone preaustinoid A3 by the combined action of the FAD-binding monooxygenases ausB and ausC, and the dioxygenase ausE. Acid-catalyzed keto-rearrangement and ring contraction of the tetraketide portion of preaustinoid A3 by ausJ lead to the formation of preaustinoid A4. The aldo-keto reductase ausK, with the help of ausH, is involved in the next step by transforming preaustinoid A4 into isoaustinone which is in turn hydroxylated by the P450 monooxygenase ausI to form austinolide. The cytochrome P450 monooxygenase ausG modifies austinolide to austinol. Austinol is further acetylated to austin by the O-acetyltransferase ausP, which spontaneously changes to dehydroaustin. The cytochrome P450 monooxygenase ausR then converts dehydroaustin is into 7-dehydrodehydroaustin. The hydroxylation catalyzed by ausR permits the O-acetyltransferase ausQ to add an additional acetyl group to the molecule, leading to the formation of acetoxydehydroaustin. The short chain dehydrogenase ausT catalyzes the reduction of the double bond present between carbon atoms 1 and 2 to convert 7-dehydrodehydroaustin into 1,2-dihydro-7-hydroxydehydroaustin. AusQ catalyzes not only an acetylation reaction but also the addition of the PKS ausV diketide product to 1,2-dihydro-7-hydroxydehydroaustin, forming precalidodehydroaustin. Finally, the iron/alpha-ketoglutarate-dependent dioxygenase converts precalidodehydroaustin into calidodehydroaustin. The protein is Polyprenyl transferase ausN of Aspergillus calidoustus.